We begin with the raw amino-acid sequence, 398 residues long: S-adenosylmethionine decarboxylase proenzyme (398 aa).

Catalysis depends on residues Glu18 and Glu21. The active-site Schiff-base intermediate with substrate; via pyruvic acid is Ser78. At Ser78 the chain carries Pyruvic acid (Ser); by autocatalysis. The Proton donor; for catalytic activity role is filled by Cys92. Residues Ser243 and His256 each act as proton acceptor; for processing activity in the active site.

The protein belongs to the eukaryotic AdoMetDC family. Pyruvate serves as cofactor. In terms of processing, is synthesized initially as an inactive proenzyme. Formation of the active enzyme involves a self-maturation process in which the active site pyruvoyl group is generated from an internal serine residue via an autocatalytic post-translational modification. Two non-identical subunits are generated from the proenzyme in this reaction, and the pyruvate is formed at the N-terminus of the alpha chain, which is derived from the carboxyl end of the proenzyme. The post-translation cleavage follows an unusual pathway, termed non-hydrolytic serinolysis, in which the side chain hydroxyl group of the serine supplies its oxygen atom to form the C-terminus of the beta chain, while the remainder of the serine residue undergoes an oxidative deamination to produce ammonia and the pyruvoyl group blocking the N-terminus of the alpha chain.

The enzyme catalyses S-adenosyl-L-methionine + H(+) = S-adenosyl 3-(methylsulfanyl)propylamine + CO2. It participates in amine and polyamine biosynthesis; S-adenosylmethioninamine biosynthesis; S-adenosylmethioninamine from S-adenosyl-L-methionine: step 1/1. The protein is S-adenosylmethionine decarboxylase proenzyme (SAMDC) of Oryza sativa subsp. japonica (Rice).